We begin with the raw amino-acid sequence, 441 residues long: uncharacterized protein (441 aa).

A run of 11 helical transmembrane segments spans residues 68 to 88 (MAIA…GPFA), 110 to 130 (ALIA…PLLV), 131 to 151 (GALV…AALP), 164 to 184 (SVAI…MLLP), 194 to 214 (GASA…LWSL), 229 to 246 (AIHG…LHGA), 260 to 280 (SGLA…LLLV), 287 to 307 (AVGG…GAFL), 337 to 357 (VAAA…LGVA), 384 to 404 (VQDA…AALI), and 412 to 432 (VFVL…TIVG).

Belongs to the major facilitator superfamily.

It is found in the cell membrane. This is an uncharacterized protein from Mycobacterium tuberculosis (strain ATCC 25618 / H37Rv).